The chain runs to 607 residues: V-type proton ATPase catalytic subunit A (607 aa).

Residue 251–258 (GAFGCGKT) coordinates ATP.

Belongs to the ATPase alpha/beta chains family. As to quaternary structure, V-ATPase is a heteromultimeric enzyme composed of a peripheral catalytic V1 complex (components A to H) attached to an integral membrane V0 proton pore complex (components: a, c, c', c'', d, e, f and VOA1).

Its subcellular location is the vacuole membrane. The catalysed reaction is ATP + H2O + 4 H(+)(in) = ADP + phosphate + 5 H(+)(out). Catalytic subunit of the V1 complex of vacuolar(H+)-ATPase (V-ATPase), a multisubunit enzyme composed of a peripheral complex (V1) that hydrolyzes ATP and a membrane integral complex (V0) that translocates protons. V-ATPase is responsible for acidifying and maintaining the pH of intracellular compartments. The protein is V-type proton ATPase catalytic subunit A (VMA1) of Encephalitozoon cuniculi (strain GB-M1) (Microsporidian parasite).